Reading from the N-terminus, the 385-residue chain is Chorismate synthase (385 aa).

Positions 43–63 (PDLDRRRPGTSRHVTQRNEPD) are disordered. 2 residues coordinate NADP(+): arginine 48 and arginine 54. Residues 125–127 (RSS), 238–239 (NA), glycine 278, 293–297 (KPTSS), and arginine 319 each bind FMN. The span at 363–372 (AQAPRTETAP) shows a compositional bias: low complexity. Residues 363-385 (AQAPRTETAPATPPLDAGDDIEA) are disordered.

It belongs to the chorismate synthase family. In terms of assembly, homotetramer. It depends on FMNH2 as a cofactor.

It carries out the reaction 5-O-(1-carboxyvinyl)-3-phosphoshikimate = chorismate + phosphate. The protein operates within metabolic intermediate biosynthesis; chorismate biosynthesis; chorismate from D-erythrose 4-phosphate and phosphoenolpyruvate: step 7/7. In terms of biological role, catalyzes the anti-1,4-elimination of the C-3 phosphate and the C-6 proR hydrogen from 5-enolpyruvylshikimate-3-phosphate (EPSP) to yield chorismate, which is the branch point compound that serves as the starting substrate for the three terminal pathways of aromatic amino acid biosynthesis. This reaction introduces a second double bond into the aromatic ring system. In Leptothrix cholodnii (strain ATCC 51168 / LMG 8142 / SP-6) (Leptothrix discophora (strain SP-6)), this protein is Chorismate synthase.